Reading from the N-terminus, the 216-residue chain is Probable Golgi SNAP receptor complex member 2 (216 aa).

Residues 1-194 (MESLYHQTNN…IERRLVEDRR (194 aa)) are Cytoplasmic-facing. A coiled-coil region spans residues 62 to 103 (QRQSSKLRVDQLKYDLRHLQTSLQTARERRQRRMQEISEREQ). A helical; Anchor for type IV membrane protein transmembrane segment spans residues 195–215 (IFIGGVVVTLLIIALIIYFLV). Position 216 (Leu216) is a topological domain, vesicular.

This sequence belongs to the GOSR2 family. In terms of assembly, part of a unique SNARE complex.

It localises to the golgi apparatus. The protein resides in the cis-Golgi network membrane. The protein localises to the golgi apparatus membrane. It is found in the endoplasmic reticulum membrane. Functionally, involved in transport of proteins from the cis/medial-Golgi to the trans-Golgi network. The sequence is that of Probable Golgi SNAP receptor complex member 2 from Drosophila melanogaster (Fruit fly).